Consider the following 350-residue polypeptide: L-threonine 3-dehydrogenase (350 aa).

Zn(2+) is bound at residue Cys-42. Catalysis depends on charge relay system residues Thr-44 and His-47. His-67, Glu-68, Cys-97, Cys-100, Cys-103, and Cys-111 together coordinate Zn(2+). NAD(+) is bound by residues Leu-179, Glu-199, Arg-204, 266-268 (LGL), and 291-292 (IT).

This sequence belongs to the zinc-containing alcohol dehydrogenase family. Homotetramer. Requires Zn(2+) as cofactor.

Its subcellular location is the cytoplasm. The enzyme catalyses L-threonine + NAD(+) = (2S)-2-amino-3-oxobutanoate + NADH + H(+). It participates in amino-acid degradation; L-threonine degradation via oxydo-reductase pathway; glycine from L-threonine: step 1/2. Functionally, catalyzes the NAD(+)-dependent oxidation of L-threonine to 2-amino-3-ketobutyrate. To a lesser extent, also catalyzes the oxidation of L-serine. The sequence is that of L-threonine 3-dehydrogenase from Thermococcus kodakarensis (strain ATCC BAA-918 / JCM 12380 / KOD1) (Pyrococcus kodakaraensis (strain KOD1)).